Consider the following 179-residue polypeptide: Large ribosomal subunit protein uL5 (179 aa).

Belongs to the universal ribosomal protein uL5 family. Part of the 50S ribosomal subunit; part of the 5S rRNA/L5/L18/L25 subcomplex. Contacts the 5S rRNA and the P site tRNA. Forms a bridge to the 30S subunit in the 70S ribosome.

This is one of the proteins that bind and probably mediate the attachment of the 5S RNA into the large ribosomal subunit, where it forms part of the central protuberance. In the 70S ribosome it contacts protein S13 of the 30S subunit (bridge B1b), connecting the 2 subunits; this bridge is implicated in subunit movement. Contacts the P site tRNA; the 5S rRNA and some of its associated proteins might help stabilize positioning of ribosome-bound tRNAs. The sequence is that of Large ribosomal subunit protein uL5 from Bacillus cereus (strain Q1).